We begin with the raw amino-acid sequence, 368 residues long: Multifunctional CCA protein (368 aa).

Residues Gly8 and Arg11 each contribute to the ATP site. Residues Gly8 and Arg11 each contribute to the CTP site. Positions 21 and 23 each coordinate Mg(2+). ATP contacts are provided by Arg91, Arg137, and Arg140. Positions 91, 137, and 140 each coordinate CTP.

It belongs to the tRNA nucleotidyltransferase/poly(A) polymerase family. Bacterial CCA-adding enzyme type 1 subfamily. As to quaternary structure, monomer. Can also form homodimers and oligomers. Mg(2+) serves as cofactor. Ni(2+) is required as a cofactor.

The catalysed reaction is a tRNA precursor + 2 CTP + ATP = a tRNA with a 3' CCA end + 3 diphosphate. It catalyses the reaction a tRNA with a 3' CCA end + 2 CTP + ATP = a tRNA with a 3' CCACCA end + 3 diphosphate. Functionally, catalyzes the addition and repair of the essential 3'-terminal CCA sequence in tRNAs without using a nucleic acid template. Adds these three nucleotides in the order of C, C, and A to the tRNA nucleotide-73, using CTP and ATP as substrates and producing inorganic pyrophosphate. tRNA 3'-terminal CCA addition is required both for tRNA processing and repair. Also involved in tRNA surveillance by mediating tandem CCA addition to generate a CCACCA at the 3' terminus of unstable tRNAs. While stable tRNAs receive only 3'-terminal CCA, unstable tRNAs are marked with CCACCA and rapidly degraded. The protein is Multifunctional CCA protein of Pseudomonas putida (strain ATCC 47054 / DSM 6125 / CFBP 8728 / NCIMB 11950 / KT2440).